We begin with the raw amino-acid sequence, 129 residues long: Photosystem II reaction center Psb28 protein (129 aa).

Residues 110-129 (GLGYSNNSGNNEGADEASEG) form a disordered region.

This sequence belongs to the Psb28 family. Part of the photosystem II complex.

The protein localises to the cellular thylakoid membrane. This Synechococcus sp. (strain WH7803) protein is Photosystem II reaction center Psb28 protein.